Consider the following 324-residue polypeptide: Beta-ketoacyl-[acyl-carrier-protein] synthase III (324 aa).

Active-site residues include cysteine 114 and histidine 246. Residues glutamine 247 to arginine 251 form an ACP-binding region. Asparagine 276 is an active-site residue.

Belongs to the thiolase-like superfamily. FabH family. In terms of assembly, homodimer.

It localises to the cytoplasm. The enzyme catalyses malonyl-[ACP] + acetyl-CoA + H(+) = 3-oxobutanoyl-[ACP] + CO2 + CoA. Its pathway is lipid metabolism; fatty acid biosynthesis. Catalyzes the condensation reaction of fatty acid synthesis by the addition to an acyl acceptor of two carbons from malonyl-ACP. Catalyzes the first condensation reaction which initiates fatty acid synthesis and may therefore play a role in governing the total rate of fatty acid production. Possesses both acetoacetyl-ACP synthase and acetyl transacylase activities. Its substrate specificity determines the biosynthesis of branched-chain and/or straight-chain of fatty acids. The protein is Beta-ketoacyl-[acyl-carrier-protein] synthase III of Campylobacter jejuni subsp. jejuni serotype O:2 (strain ATCC 700819 / NCTC 11168).